A 686-amino-acid chain; its full sequence is Mitochondrial Rho GTPase 1 (686 aa).

Over 1 to 648 (MPRRDLVRIV…PAQRIRVVAR (648 aa)) the chain is Cytoplasmic. The Miro 1 domain maps to 4 to 172 (RDLVRIVLVG…FYFAQKAVLH (169 aa)). Residues 13–20 (GDDGVGKS), 59–63 (DTSSN), and 117–120 (NKID) contribute to the GTP site. EF-hand domains are found at residues 188 to 223 (KCLE…CFST) and 341 to 376 (LGNQ…SPGN). Ca(2+)-binding residues include Asp201, Asp203, Asp205, Glu212, Asp354, Asp356, Asp358, and Glu365. A Miro 2 domain is found at 455–624 (RNVFLCYVLG…WVAITRVALD (170 aa)). GTP is bound by residues 464–471 (GATGSGKT), 506–510 (EMEGV), and 574–577 (TKSD). The chain crosses the membrane as a helical; Anchor for type IV membrane protein span at residues 649 to 665 (WGLAATTISAIVAVWMK). Residues 666 to 686 (WQGYSFKGIWGWMAKFAGLRT) lie on the Mitochondrial intermembrane side of the membrane.

The protein belongs to the mitochondrial Rho GTPase family.

Its subcellular location is the mitochondrion outer membrane. Functionally, mitochondrial GTPase involved in mitochondrial trafficking. Probably involved in control of anterograde transport of mitochondria and their subcellular distribution. This Cryptococcus neoformans var. neoformans serotype D (strain B-3501A) (Filobasidiella neoformans) protein is Mitochondrial Rho GTPase 1 (GEM1).